The primary structure comprises 282 residues: 4-diphosphocytidyl-2-C-methyl-D-erythritol kinase (282 aa).

The active site involves Lys9. Residue 98–108 coordinates ATP; sequence PMGGGLGGGSS. Residue Asp140 is part of the active site.

Belongs to the GHMP kinase family. IspE subfamily. As to quaternary structure, homodimer.

The catalysed reaction is 4-CDP-2-C-methyl-D-erythritol + ATP = 4-CDP-2-C-methyl-D-erythritol 2-phosphate + ADP + H(+). It participates in isoprenoid biosynthesis; isopentenyl diphosphate biosynthesis via DXP pathway; isopentenyl diphosphate from 1-deoxy-D-xylulose 5-phosphate: step 3/6. Catalyzes the phosphorylation of the position 2 hydroxy group of 4-diphosphocytidyl-2C-methyl-D-erythritol. This is 4-diphosphocytidyl-2-C-methyl-D-erythritol kinase from Klebsiella pneumoniae (strain 342).